Here is a 429-residue protein sequence, read N- to C-terminus: UPF0597 protein BT_2080 (429 aa).

It belongs to the UPF0597 family.

The chain is UPF0597 protein BT_2080 from Bacteroides thetaiotaomicron (strain ATCC 29148 / DSM 2079 / JCM 5827 / CCUG 10774 / NCTC 10582 / VPI-5482 / E50).